Here is an 86-residue protein sequence, read N- to C-terminus: Mitochondrial import inner membrane translocase subunit Tim10 (86 aa).

The Twin CX3C motif signature appears at 29-54 (CQAKCIATAFKESELTKGEAVCLDRC). 2 disulfides stabilise this stretch: cysteine 29–cysteine 54 and cysteine 33–cysteine 50.

This sequence belongs to the small Tim family. Heterohexamer; composed of 3 copies of tim-9/tin-9.1 and 3 copies of tim-10/tin-10, named soluble 70 kDa complex. The complex associates with the tim-22 component of the TIM22 complex. Interacts with multi-pass transmembrane proteins in transit.

It localises to the mitochondrion inner membrane. In terms of biological role, mitochondrial intermembrane chaperone that participates in the import and insertion of multi-pass transmembrane proteins into the mitochondrial inner membrane. May also be required for the transfer of beta-barrel precursors from the TOM complex to the sorting and assembly machinery (SAM complex) of the outer membrane. Acts as a chaperone-like protein that protects the hydrophobic precursors from aggregation and guide them through the mitochondrial intermembrane space. The protein is Mitochondrial import inner membrane translocase subunit Tim10 (tin-10) of Caenorhabditis briggsae.